A 104-amino-acid chain; its full sequence is Large ribosomal subunit protein bL21c (104 aa).

It belongs to the bacterial ribosomal protein bL21 family. In terms of assembly, part of the 50S ribosomal subunit.

The protein resides in the plastid. It is found in the cyanelle. Functionally, this protein binds to 23S rRNA. The sequence is that of Large ribosomal subunit protein bL21c from Cyanophora paradoxa.